The primary structure comprises 352 residues: NAD(P)H pyrophosphatase NUDT13, mitochondrial (352 aa).

Residues 1-20 (MSLYCGIACRRKFFWCYRLL) constitute a mitochondrion transit peptide. Residues 196–323 (PQMAPVAITL…PYTQQQNGTF (128 aa)) form the Nudix hydrolase domain. The Nudix box motif lies at 216–240 (RQSSFPKGMYSALAGFCDIGESVEE).

It belongs to the Nudix hydrolase family. Mg(2+) serves as cofactor. Requires Mn(2+) as cofactor. As to expression, highly expressed in metastasis-suppressed chromosome 6 melanoma hybrids.

The protein resides in the mitochondrion. It carries out the reaction NADH + H2O = reduced beta-nicotinamide D-ribonucleotide + AMP + 2 H(+). It catalyses the reaction NAD(+) + H2O = beta-nicotinamide D-ribonucleotide + AMP + 2 H(+). The catalysed reaction is NADPH + H2O = reduced beta-nicotinamide D-ribonucleotide + adenosine 2',5'-bisphosphate + 2 H(+). In terms of biological role, NAD(P)H pyrophosphatase that hydrolyzes NADH into NMNH and AMP, and NADPH into NMNH and 2',5'-ADP. Has a marked preference for the reduced pyridine nucleotides. Does not show activity toward NAD-capped RNAs; the NAD-cap is an atypical cap present at the 5'-end of some RNAs. The protein is NAD(P)H pyrophosphatase NUDT13, mitochondrial of Homo sapiens (Human).